The chain runs to 289 residues: Testis-expressed protein 26 (289 aa).

Residues 1 to 26 form a disordered region; the sequence is MEQPGPRAPDPSLCHHNLQPTDDPNW. Mn regions lie at residues 30–42, 69–83, 144–157, 179–193, and 233–247; these read ATTMRTAFTPKTG, QTQYSDEYTWKSHSK, ISLTKRDFVDRSKA, DTEFRRNYQIPAKIP, and QTTYQSDYDKTYPDF.

This Homo sapiens (Human) protein is Testis-expressed protein 26 (TEX26).